Here is a 351-residue protein sequence, read N- to C-terminus: Holliday junction branch migration complex subunit RuvB (351 aa).

Residues 1-189 (MTAHDADWSD…FGFTAHMDFY (189 aa)) form a large ATPase domain (RuvB-L) region. ATP is bound by residues L28, R29, G70, K73, T74, S75, 136-138 (EDF), R179, Y189, and R226. T74 lines the Mg(2+) pocket. The tract at residues 190-260 (EPAELQQVLA…VAKAALAVYD (71 aa)) is small ATPAse domain (RuvB-S). A head domain (RuvB-H) region spans residues 263-351 (ELGLDRLDRA…AGLGQPGLFD (89 aa)). R318 and R323 together coordinate DNA.

Belongs to the RuvB family. In terms of assembly, homohexamer. Forms an RuvA(8)-RuvB(12)-Holliday junction (HJ) complex. HJ DNA is sandwiched between 2 RuvA tetramers; dsDNA enters through RuvA and exits via RuvB. An RuvB hexamer assembles on each DNA strand where it exits the tetramer. Each RuvB hexamer is contacted by two RuvA subunits (via domain III) on 2 adjacent RuvB subunits; this complex drives branch migration. In the full resolvosome a probable DNA-RuvA(4)-RuvB(12)-RuvC(2) complex forms which resolves the HJ.

Its subcellular location is the cytoplasm. It carries out the reaction ATP + H2O = ADP + phosphate + H(+). In terms of biological role, the RuvA-RuvB-RuvC complex processes Holliday junction (HJ) DNA during genetic recombination and DNA repair, while the RuvA-RuvB complex plays an important role in the rescue of blocked DNA replication forks via replication fork reversal (RFR). RuvA specifically binds to HJ cruciform DNA, conferring on it an open structure. The RuvB hexamer acts as an ATP-dependent pump, pulling dsDNA into and through the RuvAB complex. RuvB forms 2 homohexamers on either side of HJ DNA bound by 1 or 2 RuvA tetramers; 4 subunits per hexamer contact DNA at a time. Coordinated motions by a converter formed by DNA-disengaged RuvB subunits stimulates ATP hydrolysis and nucleotide exchange. Immobilization of the converter enables RuvB to convert the ATP-contained energy into a lever motion, pulling 2 nucleotides of DNA out of the RuvA tetramer per ATP hydrolyzed, thus driving DNA branch migration. The RuvB motors rotate together with the DNA substrate, which together with the progressing nucleotide cycle form the mechanistic basis for DNA recombination by continuous HJ branch migration. Branch migration allows RuvC to scan DNA until it finds its consensus sequence, where it cleaves and resolves cruciform DNA. In Mycobacterium avium (strain 104), this protein is Holliday junction branch migration complex subunit RuvB.